The chain runs to 302 residues: GTPase Era (302 aa).

An Era-type G domain is found at 10–178; sequence RCGYVAIVGR…EAQIAKHLPE (169 aa). The G1 stretch occupies residues 18–25; it reads GRPNVGKS. Position 18-25 (18-25) interacts with GTP; sequence GRPNVGKS. Positions 44–48 are G2; that stretch reads QTTRH. Residues 65 to 68 are G3; sequence DTPG. Residues 65 to 69 and 127 to 130 contribute to the GTP site; these read DTPGM and NKTD. Positions 127-130 are G4; it reads NKTD. A G5 region spans residues 157 to 159; sequence ISA. A KH type-2 domain is found at 201–285; sequence VREKIMRQLG…MLNLWVKVKG (85 aa).

It belongs to the TRAFAC class TrmE-Era-EngA-EngB-Septin-like GTPase superfamily. Era GTPase family. Monomer.

The protein resides in the cytoplasm. Its subcellular location is the cell inner membrane. Functionally, an essential GTPase that binds both GDP and GTP, with rapid nucleotide exchange. Plays a role in 16S rRNA processing and 30S ribosomal subunit biogenesis and possibly also in cell cycle regulation and energy metabolism. This Pseudomonas putida (strain ATCC 47054 / DSM 6125 / CFBP 8728 / NCIMB 11950 / KT2440) protein is GTPase Era.